The sequence spans 157 residues: Transcription inhibitor protein Gfh1 (157 aa).

A coiled-coil region spans residues 1-74; sequence MAREVKLTKA…LEDVLSRAVI (74 aa).

This sequence belongs to the GreA/GreB family. As to quaternary structure, interacts with RNAP.

Its function is as follows. Inhibits all catalytic activities of RNA polymerase (RNAP) by partially occluding its substrate-binding site and preventing NTP binding. The polypeptide is Transcription inhibitor protein Gfh1 (gfh1) (Thermus aquaticus).